Consider the following 1415-residue polypeptide: DNA-directed RNA polymerase subunit beta' (1415 aa).

The Zn(2+) site is built by C71, C73, C86, and C89. D461, D463, and D465 together coordinate Mg(2+). C815, C889, C896, and C899 together coordinate Zn(2+).

It belongs to the RNA polymerase beta' chain family. As to quaternary structure, the RNAP catalytic core consists of 2 alpha, 1 beta, 1 beta' and 1 omega subunit. When a sigma factor is associated with the core the holoenzyme is formed, which can initiate transcription. Requires Mg(2+) as cofactor. Zn(2+) is required as a cofactor.

It carries out the reaction RNA(n) + a ribonucleoside 5'-triphosphate = RNA(n+1) + diphosphate. Functionally, DNA-dependent RNA polymerase catalyzes the transcription of DNA into RNA using the four ribonucleoside triphosphates as substrates. This chain is DNA-directed RNA polymerase subunit beta', found in Haemophilus influenzae (strain ATCC 51907 / DSM 11121 / KW20 / Rd).